Here is a 466-residue protein sequence, read N- to C-terminus: Replicative helicase loading/DNA remodeling protein DnaB (466 aa).

The tract at residues 3–113 (RQAFEFGLRP…ETQFVYQLIQ (111 aa)) is DDBH1. The DDBH2-1 stretch occupies residues 200-292 (EMLRQMLGKH…TSSSAGKSSE (93 aa)). Positions 293–401 (VNPKPQSDEW…QPKNEGSSGN (109 aa)) are DDBH2-2.

This sequence belongs to the DnaB/DnaD family. In terms of assembly, homotetramer, higher-order oligomers are induced by ssDNA. The DNA replisome assembles sequentially on oriC in this order; DnaA, DnaD, DnaB, DnaI-DnaC helicase. Part of the replication restart primosome, PriA binds first, then DnaD and subsequently DnaB bind.

In terms of biological role, helps DnaI load the DnaC replicative helicase onto single-stranded (ss)DNA. During DNA replication from the origin of replication (oriC) in the DNA replisome, DnaB and DnaD are required after DnaA and before subsequent helicase DnaC loading. Component of the replication restart primosome, which reloads the replicative helicase on sites other than oriC. Essential for replication initiation of the chromosome and plasmids. Remodels DNA, laterally compacts supercoiled plasmid and linear DNA. Binds supercoiled, nicked and linear double-stranded (ds)DNA and phage phiX174 single-stranded (ss)DNA; phiX174 ssDNA is a better substrate than for B.subtilis. No binding to phage M13 ssDNA although it induces oligomers. This Staphylococcus aureus (strain NCTC 8325 / PS 47) protein is Replicative helicase loading/DNA remodeling protein DnaB.